The chain runs to 393 residues: NAD(P)H-quinone oxidoreductase subunit H, chloroplastic (393 aa).

This sequence belongs to the complex I 49 kDa subunit family. In terms of assembly, NDH is composed of at least 16 different subunits, 5 of which are encoded in the nucleus.

It is found in the plastid. The protein resides in the chloroplast thylakoid membrane. The catalysed reaction is a plastoquinone + NADH + (n+1) H(+)(in) = a plastoquinol + NAD(+) + n H(+)(out). It catalyses the reaction a plastoquinone + NADPH + (n+1) H(+)(in) = a plastoquinol + NADP(+) + n H(+)(out). Its function is as follows. NDH shuttles electrons from NAD(P)H:plastoquinone, via FMN and iron-sulfur (Fe-S) centers, to quinones in the photosynthetic chain and possibly in a chloroplast respiratory chain. The immediate electron acceptor for the enzyme in this species is believed to be plastoquinone. Couples the redox reaction to proton translocation, and thus conserves the redox energy in a proton gradient. In Oenothera argillicola (Appalachian evening primrose), this protein is NAD(P)H-quinone oxidoreductase subunit H, chloroplastic.